We begin with the raw amino-acid sequence, 209 residues long: Thymidylate kinase (209 aa).

An ATP-binding site is contributed by Gly-11–Thr-18.

The protein belongs to the thymidylate kinase family.

It catalyses the reaction dTMP + ATP = dTDP + ADP. Functionally, phosphorylation of dTMP to form dTDP in both de novo and salvage pathways of dTTP synthesis. This is Thymidylate kinase (tmk) from Pasteurella multocida (strain Pm70).